The following is a 205-amino-acid chain: Beta-crystallin B2 (205 aa).

Alanine 2 is subject to N-acetylalanine. Residues 2–16 (ASDHQTQAGKPQPLN) are N-terminal arm. 2 Beta/gamma crystallin 'Greek key' domains span residues 17-56 (PKII…LVQA) and 57-101 (GPWV…RPIK). A connecting peptide region spans residues 102–106 (VDSQE). Beta/gamma crystallin 'Greek key' domains follow at residues 107–148 (HKII…RVQS) and 149–191 (GTWV…RRIR). The tract at residues 193–205 (MQWHQRGAFHPTN) is C-terminal arm.

Belongs to the beta/gamma-crystallin family. As to quaternary structure, homo/heterodimer, or complexes of higher-order. The structure of beta-crystallin oligomers seems to be stabilized through interactions between the N-terminal arms.

Crystallins are the dominant structural components of the vertebrate eye lens. This is Beta-crystallin B2 (CRYBB2) from Oryctolagus cuniculus (Rabbit).